Reading from the N-terminus, the 701-residue chain is Octapeptide-repeat antigen (701 aa).

13 N-linked (GlcNAc...) asparagine glycosylation sites follow: Asn-40, Asn-41, Asn-76, Asn-111, Asn-127, Asn-139, Asn-181, Asn-189, Asn-311, Asn-334, Asn-344, Asn-477, and Asn-557. The interval 120 to 140 (IENEEKSNGSRKSSNKQKYNE) is disordered. The tract at residues 641-701 (LSGSSTGSMN…IKSGSKDHIK (61 aa)) is disordered. Residues 642–655 (SGSSTGSMNNGKSG) are compositionally biased toward low complexity. A run of 6 repeats spans residues 653-660 (KSGSKSDI), 661-668 (KGGSKDDI), 669-676 (KSGSKDDI), 677-684 (KSGSKADI), 685-692 (KSGSKDDI), and 693-700 (KSGSKDHI). Residues 653–700 (KSGSKSDIKGGSKDDIKSGSKDDIKSGSKADIKSGSKDDIKSGSKDHI) are 6 X 8 AA approximate tandem repeats. Over residues 656–701 (SKSDIKGGSKDDIKSGSKDDIKSGSKADIKSGSKDDIKSGSKDHIK) the composition is skewed to basic and acidic residues.

This sequence belongs to the ATP-dependent AMP-binding enzyme family.

It is found in the parasitophorous vacuole. The polypeptide is Octapeptide-repeat antigen (Plasmodium falciparum (isolate NF7 / Ghana)).